We begin with the raw amino-acid sequence, 964 residues long: MLRAAVAAAEELRSPLLRVIGTLRDGRGSVLLGRRVRFCSNSSASDTEAAVAEAEAKAEDASAAEGEADSKASSAIVPTSTNIDDCLSVIALPLPHRPLFPGFYMPINVKDQKLLQALIENRKRSAPYAGAFLVKDEEGTDPNIVTGSDSAKSIDDLKGKDLLKRLHEVGTLAQITSIQGDHVVLLGHRRLRITEMVEEDPLTVKVDHLKEKPYNKDDDVMKATSFEVISTLREVLRTSSLWKDHVQTYTQHIGDFNYQRLADFGAAISGANKLLCQEVLEELDVYKRLKLTLELVKKEMEISKLQQSIAKAIEEKISGDQRRYLLNEQLKAIKKELGLETDDKTALSAKFRERIESKKDKCPPHVLQVIEEELTKLQLLEASSSEFSVTRNYLDWLTVLPWGNYSDENFDVHHAQKILDEDHYGLSDVKERILEFIAVGKLRGTSQGKIICLSGPPGVGKTSIGRSIARALNRQFYRFSVGGLADVAEIKGHRRTYVGAMPGKMVQCLKSVGTANPLVLIDEIDKLGKGHSGDPASALLELLDPEQNVNFLDHYLDVPIDLSKVLFVCTANVIEMIPNPLLDRMEIIAIAGYITDEKMHIARDYLEKNTRQACGIKPEQVEVTDTALLALIENYCREAGVRNLQKQIEKIYRKIALQLVRQGVSNEPDHESVSASVTEESGNGDNTTTKDEILKDPAVEDASVTNNVTNPASEEANEENLTSEAAKEDSTSKGNKGTDGAADKAIEKVVVDSSNLGDFVGKPVFQAERIYEHTPVGVVMGLAWTAMGGSTLYIETKKVEEREGKGALVLTGQLGDVMKESAQIAHTVGRAVLLEKEPDNHFFANSKVHLHVPAGSTPKDGPSAGCTMITSMLSLAMGKPVKKDLAMTGEVTLTGRILPIGGVKEKTIAARRSAIKTLIFPAANKRDFDELASNVKEGLEVHFVDTYSEIYDLAFQSDAGTETS.

Positions 89–300 constitute a Lon N-terminal domain; it reads VIALPLPHRP…LTLELVKKEM (212 aa). Residue 455 to 462 participates in ATP binding; that stretch reads GPPGVGKT. Residues 663-740 are disordered; that stretch reads GVSNEPDHES…TSKGNKGTDG (78 aa). Residues 673-687 are compositionally biased toward polar residues; it reads VSASVTEESGNGDNT. Basic and acidic residues predominate over residues 688 to 698; it reads TTKDEILKDPA. Residues 703–712 are compositionally biased toward polar residues; the sequence is SVTNNVTNPA. Positions 773-957 constitute a Lon proteolytic domain; it reads HTPVGVVMGL…SEIYDLAFQS (185 aa). Active-site residues include Ser-863 and Lys-906.

The protein belongs to the peptidase S16 family. As to quaternary structure, homoheptamer. Organized in a ring with a central cavity.

Its subcellular location is the mitochondrion matrix. It catalyses the reaction Hydrolysis of proteins in presence of ATP.. Its function is as follows. ATP-dependent serine protease that mediates the selective degradation of misfolded, unassembled or oxidatively damaged polypeptides as well as certain short-lived regulatory proteins in the mitochondrial matrix. May also have a chaperone function in the assembly of inner membrane protein complexes. Participates in the regulation of mitochondrial gene expression and in the maintenance of the integrity of the mitochondrial genome. Binds to mitochondrial DNA in a site-specific manner. This Zea mays (Maize) protein is Lon protease homolog, mitochondrial (LON2).